A 509-amino-acid polypeptide reads, in one-letter code: MNLMINLKPLTFLPFFGRLVFLSGVIYNTAWANTVIPVDNSRPDETFSQTSPKQHLFSQKPKPTEPTSSASSQQISLTIEQLASRPDLVLRALIPALKNNDMRGVEILLPIYAKQSPDPFLLKWAQAVVARKQGKLNESVRLYRQIIAEKPNLQPARLQLAIALTQNRENEAAKAQFNQLRSENLPAPLLTLIDSYIDTINQRDSWNVYGGVNYLHENNVNNAPPKGTKAEGFTPSSQPEKAHGLSYFINLSKNWSLAHGFFTEFSADINGKYYWDNHKYDEFSTRLNLGGGYRNAKTEVKLMPFVEQFWYVGGENATKDARTLHRYSKSSGINLDVDYWLTPNWKISTVLEYTEQRYIQPQRQNSNGNSYSISNTLIYMPNSQQFWFVGLDYYQKNTRLKAYAFERQGIRLGWGQEWPKGISTRLQTSYATRTYRAPSAEKNMIFAPSFFKVVQKNHEYGVNFTIWHRSLHWLGITPKITWAYQKTTSNNPFSEYDRNRIYLTFSKTF.

A signal peptide spans 1-32 (MNLMINLKPLTFLPFFGRLVFLSGVIYNTAWA). The interval 33 to 204 (NTVIPVDNSR…SYIDTINQRD (172 aa)) is N-terminal domain. The disordered stretch occupies residues 43 to 72 (PDETFSQTSPKQHLFSQKPKPTEPTSSASS). A compositionally biased stretch (polar residues) spans 46-57 (TFSQTSPKQHLF). The stretch at 120 to 153 (FLLKWAQAVVARKQGKLNESVRLYRQIIAEKPNL) is one TPR repeat. Residues 205-509 (SWNVYGGVNY…RIYLTFSKTF (305 aa)) form a C-terminal probable beta barrel region. A run of 14 beta stranded transmembrane segments spans residues 206-216 (WNVYGGVNYLH), 245-256 (LSYFINLSKNWS), 261-270 (FFTEFSADIN), 284-294 (STRLNLGGGYR), 298-308 (TEVKLMPFVEQ), 331-341 (SGINLDVDYWL), 345-355 (WKISTVLEYTE), 371-381 (YSISNTLIYMP), 386-395 (FWFVGLDYYQ), 408-417 (QGIRLGWGQE), 423-432 (STRLQTSYAT), 461-470 (GVNFTIWHRS), 476-485 (ITPKITWAYQ), and 499-509 (NRIYLTFSKTF).

The protein belongs to the Slam family.

Its subcellular location is the cell outer membrane. In terms of biological role, required for correct export to the cell surface of some cell outer membrane lipoproteins (tested with PM1514) upon heterologous expression in E.coli and probably also in Pasteurella. In Pasteurella multocida (strain Pm70), this protein is Surface lipoprotein assembly modifier.